We begin with the raw amino-acid sequence, 484 residues long: Probable UDP-N-acetylglucosamine pyrophosphorylase (484 aa).

The short motif at 107–110 (LAGG) is the Substrate binding element. UTP is bound by residues 107-110 (LAGG), lysine 121, glutamine 200, and glycine 226. Asparagine 227 contacts substrate. Aspartate 255 serves as a coordination point for UTP. Positions 304-305 (EY) match the Substrate binding motif. Lysine 377 lines the UTP pocket. Residue lysine 407 participates in substrate binding.

Belongs to the UDPGP type 1 family.

The protein resides in the cytoplasm. The enzyme catalyses N-acetyl-alpha-D-glucosamine 1-phosphate + UTP + H(+) = UDP-N-acetyl-alpha-D-glucosamine + diphosphate. The protein operates within nucleotide-sugar biosynthesis; UDP-N-acetyl-alpha-D-glucosamine biosynthesis; UDP-N-acetyl-alpha-D-glucosamine from N-acetyl-alpha-D-glucosamine 1-phosphate: step 1/1. The sequence is that of Probable UDP-N-acetylglucosamine pyrophosphorylase from Caenorhabditis elegans.